The chain runs to 689 residues: Methionine--tRNA ligase (689 aa).

Positions 16-26 (PYANAGLHLGH) match the 'HIGH' region motif. Positions 147, 150, 160, and 163 each coordinate Zn(2+). Positions 342–346 (KMSKS) match the 'KMSKS' region motif. K345 is a binding site for ATP. A tRNA-binding domain is found at 585–689 (DFAKVDLRVG…AGVKPGMRVG (105 aa)).

This sequence belongs to the class-I aminoacyl-tRNA synthetase family. MetG type 1 subfamily. As to quaternary structure, homodimer. Zn(2+) is required as a cofactor.

It localises to the cytoplasm. The catalysed reaction is tRNA(Met) + L-methionine + ATP = L-methionyl-tRNA(Met) + AMP + diphosphate. Functionally, is required not only for elongation of protein synthesis but also for the initiation of all mRNA translation through initiator tRNA(fMet) aminoacylation. In Chromobacterium violaceum (strain ATCC 12472 / DSM 30191 / JCM 1249 / CCUG 213 / NBRC 12614 / NCIMB 9131 / NCTC 9757 / MK), this protein is Methionine--tRNA ligase.